A 102-amino-acid polypeptide reads, in one-letter code: Antitoxin VapB46 (102 aa).

The protein belongs to the phD/YefM antitoxin family.

In terms of biological role, antitoxin component of a type II toxin-antitoxin (TA) system. Neutralizes the effect of cognate toxin VapC46. The sequence is that of Antitoxin VapB46 (vapB46) from Mycobacterium tuberculosis (strain CDC 1551 / Oshkosh).